Here is a 782-residue protein sequence, read N- to C-terminus: MNTLQRLCVVCSKCNECAMELECLKYCDPAIVLVDSAPFKRNALTVVHLYRRLCPALAEQNARYQASLITLYLEMLLRCLYEDVLLVDEALGEFERHGDRQRYYRRVLRLDRCACHDTLEVTFTERIRLTVDVATLNEVERLLCKINCVYGVLEPTRGLELCRRLLSLMGRLCGISPVAAPEAYVENLTCLQCYEELAAVPNQGRSILKRLRGLLCDHLTVRKSLVQLETGIQTMEQDIVETVGSRPRLSSLLELLKGLSSSAAVSHAYISEAEDTLRRYNLFTDIPPRIYSLSDFTYWSKTSEVIVQRVNVTVQQLNMYHSLCRTLRNELGQYLYGDRVEDLFTLSEAQLGEDERLYVGSIYAAPERIVDLMTSLSLQSFENNPVFNKLHENNEIYSKIRSLLEEIRRPLDGAGTRGAAAATAAGARGAAEGTGGAAAAGGAAAAAGEAAGGPFQCGDPAARAHDVVREVHVRKKAYLQKVSELGYNRVMQCIKGQEKLIKKLVNVNLLGTVCFEVLAKVINGFIRRRAYLERVDGVVDVDRLLQYDDHLYVVNNLVHRRLPAESLPALGQEFYRFVNGPVFQHHADRYPLPYNIDMAYACDNAGMLPHLKEDLVRLAEGTVAPSEWMVAPYRRFFDLGAALDLNELQKGFWAHVREIVFSVALYNEAFGKELRLCRADEPVDEERERLVVTYNVDGPLFLYAGGGVWKSKDLYLLLYQHLNGAAAPPPPAAPSPPPAEPATTAGASRKRPAVESPGVLLDLVRDADRESSLVPDCLLYDP.

The segment at 190–218 (CLQCYEELAAVPNQGRSILKRLRGLLCDH) adopts a C3H1-type zinc-finger fold. 666–673 (YNEAFGKE) serves as a coordination point for ATP. Residues 727 to 740 (APPPPAAPSPPPAE) are compositionally biased toward pro residues. The tract at residues 727–754 (APPPPAAPSPPPAEPATTAGASRKRPAV) is disordered.

It belongs to the herpesviridae TRM1 protein family. In terms of assembly, associates with TRM2 and TRM3 to form the tripartite terminase complex. Interacts with portal protein.

The protein resides in the host nucleus. Functionally, component of the molecular motor that translocates viral genomic DNA in empty capsid during DNA packaging. Forms a tripartite terminase complex together with TRM2 and TRM3 in the host cytoplasm. Once the complex reaches the host nucleus, it interacts with the capsid portal vertex. This portal forms a ring in which genomic DNA is translocated into the capsid. TRM1 carries an endonuclease activity that plays an important role for the cleavage of concatemeric viral DNA into unit length genomes. This Tupaiid herpesvirus (strain 2) (TuHV-2) protein is Tripartite terminase subunit 1.